We begin with the raw amino-acid sequence, 596 residues long: Proton channel OTOP3 (596 aa).

Residues 1 to 21 (MGRGARAAAAQSRWGRASRAS) are compositionally biased toward low complexity. The disordered stretch occupies residues 1-59 (MGRGARAAAAQSRWGRASRASVSPGRTIRSAPAVGEAQETEAAPEKENRVDVGAEERAA). Residues 1-88 (MGRGARAAAA…RDRQAQKAGQ (88 aa)) lie on the Cytoplasmic side of the membrane. S21 and S23 each carry phosphoserine. The segment covering 43–59 (APEKENRVDVGAEERAA) has biased composition (basic and acidic residues). Residues 89–109 (LFSGLLALNVVFLGGAFICSM) form a helical membrane-spanning segment. At 110-119 (IFNKVAVTLG) the chain is on the extracellular side. Residues 120-143 (DVWILLATLKVLSLLWLLYYVAST) traverse the membrane as a helical segment. Over 144 to 159 (TRRPHAVLYQDPHAGP) the chain is Cytoplasmic. The helical transmembrane segment at 160–181 (LWVRGSLVLFGSCTFCLNIFRV) threads the bilayer. Over 182–193 (GYDVSHIRCKSQ) the chain is Extracellular. A helical membrane pass occupies residues 194–217 (LDLVFSVIEMVFIGVQTWVLWKHC). The Cytoplasmic segment spans residues 218–225 (KDCVRVQT). A helical transmembrane segment spans residues 226–248 (NFTRCGLMLTLATNLLLWVLAVT). Residues 249–295 (NDSMHREIEAELGILMEKSTGNETNTCLCLNATACEAFRRGFLMLYP) are Extracellular-facing. The chain crosses the membrane as a helical span at residues 296–312 (FSTEYCLICCAVLFVMW). At 313–338 (KNVGRHVAPHMGAHPATAPFHLHGAI) the chain is on the cytoplasmic side. A helical membrane pass occupies residues 339–358 (FGPLLGLLVLLAGVCVFVLF). Over 359–372 (QIEASGPAIACQYF) the chain is Extracellular. The chain crosses the membrane as a helical span at residues 373–395 (TLYYAFYVAVLPTMSLACLAGTA). Topologically, residues 396–413 (IHGLEERELDTVKNPTRS) are cytoplasmic. A helical membrane pass occupies residues 414-435 (LDVVLLMGAALGQMGIAYFSIV). Residues 436 to 446 (AIVAKRPHELL) are Extracellular-facing. Residues 447 to 469 (NRLILAYSLLLILQHIAQNLFII) traverse the membrane as a helical segment. Residues 470-529 (EGLHRRPLWETVPEGLAGKQEAEPPRRGSLLELGQGLQRASLAYIHSYSHLNWKRRALKE) lie on the Cytoplasmic side of the membrane. Residues 530–547 (ISLFLILCNITLWMMPAF) traverse the membrane as a helical segment. The Extracellular portion of the chain corresponds to 548-566 (GIHPEFENGLEKDFYGYQI). The helical transmembrane segment at 567–589 (WFAIVNFGLPLGVFYRMHSVGGL) threads the bilayer. The Cytoplasmic segment spans residues 590 to 596 (VEVYLGA).

The protein belongs to the otopetrin family. As to quaternary structure, homodimer.

Its subcellular location is the cell membrane. The catalysed reaction is H(+)(in) = H(+)(out). Activated by extracellular acidification. Activated by Zn(2+) under non-acidic conditions. Proton-selective channel gated by extracellular protons. The protein is Proton channel OTOP3 of Homo sapiens (Human).